Here is a 142-residue protein sequence, read N- to C-terminus: Holo-[acyl-carrier-protein] synthase (142 aa).

Positions 8 and 57 each coordinate Mg(2+).

It belongs to the P-Pant transferase superfamily. AcpS family. The cofactor is Mg(2+).

The protein resides in the cytoplasm. It carries out the reaction apo-[ACP] + CoA = holo-[ACP] + adenosine 3',5'-bisphosphate + H(+). Transfers the 4'-phosphopantetheine moiety from coenzyme A to a Ser of acyl-carrier-protein. This is Holo-[acyl-carrier-protein] synthase from Maricaulis maris (strain MCS10) (Caulobacter maris).